The sequence spans 20 residues: Pregnancy-associated glycoprotein 61C (20 aa).

The protein belongs to the peptidase A1 family. In terms of processing, N-glycosylated. As to expression, expressed in chorionic epithelium (trophectoderm).

The protein resides in the secreted. The protein localises to the extracellular space. This Bubalus bubalis (Domestic water buffalo) protein is Pregnancy-associated glycoprotein 61C.